The sequence spans 128 residues: Small ribosomal subunit protein uS14m (128 aa).

This sequence belongs to the universal ribosomal protein uS14 family. In terms of assembly, component of the mitochondrial ribosome small subunit (28S) which comprises a 12S rRNA and about 30 distinct proteins. Interacts with LIAT1.

The protein resides in the mitochondrion. The polypeptide is Small ribosomal subunit protein uS14m (MRPS14) (Bos taurus (Bovine)).